The sequence spans 219 residues: Small ribosomal subunit protein uS3 (219 aa).

A KH type-2 domain is found at 39–108 (IKEFIKKNYF…KVTVKVQEIK (70 aa)).

This sequence belongs to the universal ribosomal protein uS3 family. In terms of assembly, part of the 30S ribosomal subunit. Forms a tight complex with proteins S10 and S14.

Its function is as follows. Binds the lower part of the 30S subunit head. Binds mRNA in the 70S ribosome, positioning it for translation. This Fusobacterium nucleatum subsp. nucleatum (strain ATCC 25586 / DSM 15643 / BCRC 10681 / CIP 101130 / JCM 8532 / KCTC 2640 / LMG 13131 / VPI 4355) protein is Small ribosomal subunit protein uS3.